The sequence spans 336 residues: Vacuolar protein sorting-associated protein 26B (336 aa).

3 positions are modified to phosphoserine: Ser-302, Ser-304, and Ser-319.

This sequence belongs to the VPS26 family. As to quaternary structure, component of the heterotrimeric retromer cargo-selective complex (CSC), also described as vacuolar protein sorting VPS subcomplex (VPS,) formed by VPS26 (VPS26A or VPS26B), VPS29 and VPS35. The CSC has a highly elongated structure with VPS26 and VPS29 binding independently at opposite distal ends of VPS35 as central platform. The CSC is believed to associate with variable sorting nexins to form functionally distinct retromer complex variants. The originally described retromer complex (also called SNX-BAR retromer) is a pentamer containing the CSC and a heterodimeric membrane-deforming subcomplex formed between SNX1 or SNX2 and SNX5 or SNX6 (also called SNX-BAR subcomplex); the respective CSC and SNX-BAR subcomplexes associate with low affinity. The CSC associates with SNX3 to form a SNX3-retromer complex. The CSC associates with SNX27, the WASH complex and the SNX-BAR subcomplex to form the SNX27-retromer complex. Interacts with VPS29, VPS35, TBC1D5, GOLPH3, SNX27.

The protein resides in the cytoplasm. It is found in the membrane. Its subcellular location is the early endosome. The protein localises to the late endosome. In terms of biological role, acts as a component of the retromer cargo-selective complex (CSC). The CSC is believed to be the core functional component of retromer or respective retromer complex variants acting to prevent missorting of selected transmembrane cargo proteins into the lysosomal degradation pathway. The recruitment of the CSC to the endosomal membrane involves RAB7A and SNX3. The SNX-BAR retromer mediates retrograde transport of cargo proteins from endosomes to the trans-Golgi network (TGN) and is involved in endosome-to-plasma membrane transport for cargo protein recycling. The SNX3-retromer mediates the retrograde transport of WLS distinct from the SNX-BAR retromer pathway. The SNX27-retromer is believed to be involved in endosome-to-plasma membrane trafficking and recycling of a broad spectrum of cargo proteins. The CSC seems to act as recruitment hub for other proteins, such as the WASH complex and TBC1D5. May be involved in retrograde transport of SORT1 but not of IGF2R. Acts redundantly with VSP26A in SNX-27 mediated endocytic recycling of SLC2A1/GLUT1. This is Vacuolar protein sorting-associated protein 26B (VPS26B) from Homo sapiens (Human).